The sequence spans 664 residues: tRNA (carboxymethyluridine(34)-5-O)-methyltransferase ALKBH8 (664 aa).

An RRM domain is found at 43 to 120; sequence QSLVVANGGL…QKIILYLNFV (78 aa). Residues 220–337 enclose the Fe2OG dioxygenase domain; the sequence is KPDQMTINQY…RTSFTFRKVR (118 aa). 227–229 is a binding site for 2-oxoglutarate; that stretch reads NQY. Fe cation-binding residues include histidine 238 and aspartate 240. Histidine 242 is a Zn(2+) binding site. Histidine 292 lines the Fe cation pocket. 2-oxoglutarate contacts are provided by arginine 328 and arginine 334. Zn(2+) contacts are provided by cysteine 341, cysteine 343, and cysteine 349. Residues 411 to 664 form a methyltransferase domain region; sequence ADIGCGNGKY…GNWCVILQKA (254 aa). Positions 516-575 are disordered; it reads KYLKGNRNSQGKKEEMNSDTSVQRSLVEQMPDMGSRDSASSVPRINDSQEGGCNSRQVSN. Polar residues predominate over residues 552–575; sequence DSASSVPRINDSQEGGCNSRQVSN.

It belongs to the alkB family. In terms of assembly, interacts with TRMT112. It depends on Fe(2+) as a cofactor.

The protein resides in the cytoplasm. The protein localises to the nucleus. It catalyses the reaction 5-(carboxymethyl)uridine(34) in tRNA + S-adenosyl-L-methionine = 5-(2-methoxy-2-oxoethyl)uridine(34) in tRNA + S-adenosyl-L-homocysteine. Catalyzes the methylation of 5-carboxymethyl uridine to 5-methylcarboxymethyl uridine at the wobble position of the anticodon loop in tRNA via its methyltransferase domain. Catalyzes the last step in the formation of 5-methylcarboxymethyl uridine at the wobble position of the anticodon loop in target tRNA. Has a preference for tRNA(Arg) and tRNA(Glu), and does not bind tRNA(Lys). Binds tRNA and catalyzes the iron and alpha-ketoglutarate dependent hydroxylation of 5-methylcarboxymethyl uridine at the wobble position of the anticodon loop in tRNA via its dioxygenase domain, giving rise to 5-(S)-methoxycarbonylhydroxymethyluridine; has a preference for tRNA(Gly). Required for normal survival after DNA damage. May inhibit apoptosis and promote cell survival and angiogenesis. In Macaca fascicularis (Crab-eating macaque), this protein is tRNA (carboxymethyluridine(34)-5-O)-methyltransferase ALKBH8 (ALKBH8).